Consider the following 2869-residue polypeptide: uncharacterized protein (2869 aa).

Residues 1–10 (MNINRNNIND) show a composition bias toward low complexity. Disordered stretches follow at residues 1–132 (MNIN…SSNK), 171–349 (NNNN…DNYR), 380–485 (FNES…TSSS), 498–517 (KEKHNKKHENGDISESKPKK), 690–812 (NQNQ…NQNQ), 860–1074 (INNN…INSN), 1108–1175 (INNI…NSNS), 1188–1216 (SNSNGFNNNNSNDQRNIDSSSNSDIVDVD), 1224–1243 (VFIVDDTSSNKSNRASSVKT), 1340–1448 (ESNS…GNNI), 1476–1704 (IDNC…SNYY), 1731–1832 (NSNS…NEGF), and 2725–2773 (DRVR…NNNE). The segment covering 14-25 (HSTSFNDNFDSF) has biased composition (polar residues). Low complexity-rich tracts occupy residues 26 to 124 (GNQN…NPKN), 171 to 348 (NNNN…YDNY), 388 to 414 (NNNTNFNNQTFGNNNKNQNNDNNLNNN), 421 to 446 (YYDNQYNSNIDNIGNSDDSIGGQTNK), and 454 to 478 (KNNNNNNNNNNNNNNNNNNNNNSNN). The span at 505–514 (HENGDISESK) shows a compositional bias: basic and acidic residues. 2 stretches are compositionally biased toward low complexity: residues 690 to 707 (NQNQKQNQNQNQKNQNHQ) and 714 to 749 (PQRQRYFPQDKPQNQNNQPPLQHQHQYQYQYQNQDQ). Basic and acidic residues predominate over residues 750–763 (YQDHDHEHEHDHDQ). Residues 764 to 781 (NQNQNQNQHQSRNQNQDQ) show a composition bias toward low complexity. The segment covering 782 to 795 (YQDHDHEHEHDHDQ) has biased composition (basic and acidic residues). 5 stretches are compositionally biased toward low complexity: residues 796–812 (NQNQNQYQSQNQQNQNQ), 860–891 (INNNNNNNNNNNNNNNNYYNYNQNQNQNQSQN), 898–911 (DNRINSNNSLSSRD), 921–991 (CDFN…SFNN), and 1000–1074 (NNHN…INSN). Over residues 1188 to 1212 (SNSNGFNNNNSNDQRNIDSSSNSDI) the composition is skewed to low complexity. The span at 1230–1243 (TSSNKSNRASSVKT) shows a compositional bias: polar residues. Composition is skewed to low complexity over residues 1377–1448 (DNGN…GNNI) and 1476–1639 (IDNC…NDND). The span at 1640-1659 (IGNDFDNDNDNDSYIDDDNN) shows a compositional bias: acidic residues. Composition is skewed to low complexity over residues 1660–1704 (VYDN…SNYY), 1731–1823 (NSNS…NNNS), and 2739–2754 (SSSGSSIGNPSSSGGS). Residues 2758 to 2773 (NLDDSENESDSENNNE) show a composition bias toward acidic residues.

This is an uncharacterized protein from Dictyostelium discoideum (Social amoeba).